The chain runs to 253 residues: uncharacterized protein (253 aa).

Residues 200 to 209 (TGREHAHKGP) show a composition bias toward basic and acidic residues. Disordered regions lie at residues 200 to 225 (TGRE…PNPA) and 234 to 253 (QHSP…SAAT).

Most abundantly expressed in gastrointestinal tissues. Expressed at lower levels in kidney and placenta. Expressed in fetal brain, liver, placenta, kidney and lung.

This is an uncharacterized protein from Homo sapiens (Human).